Reading from the N-terminus, the 314-residue chain is 4-hydroxy-3-methylbut-2-enyl diphosphate reductase (314 aa).

C12 provides a ligand contact to [4Fe-4S] cluster. Positions 41 and 74 each coordinate (2E)-4-hydroxy-3-methylbut-2-enyl diphosphate. H41 and H74 together coordinate dimethylallyl diphosphate. The isopentenyl diphosphate site is built by H41 and H74. Residue C96 participates in [4Fe-4S] cluster binding. (2E)-4-hydroxy-3-methylbut-2-enyl diphosphate is bound at residue H124. H124 lines the dimethylallyl diphosphate pocket. Residue H124 coordinates isopentenyl diphosphate. E126 functions as the Proton donor in the catalytic mechanism. (2E)-4-hydroxy-3-methylbut-2-enyl diphosphate is bound at residue T167. Residue C197 coordinates [4Fe-4S] cluster. The (2E)-4-hydroxy-3-methylbut-2-enyl diphosphate site is built by S225, S226, N227, and S269. Dimethylallyl diphosphate contacts are provided by S225, S226, N227, and S269. Isopentenyl diphosphate-binding residues include S225, S226, N227, and S269.

The protein belongs to the IspH family. [4Fe-4S] cluster serves as cofactor.

It carries out the reaction isopentenyl diphosphate + 2 oxidized [2Fe-2S]-[ferredoxin] + H2O = (2E)-4-hydroxy-3-methylbut-2-enyl diphosphate + 2 reduced [2Fe-2S]-[ferredoxin] + 2 H(+). The enzyme catalyses dimethylallyl diphosphate + 2 oxidized [2Fe-2S]-[ferredoxin] + H2O = (2E)-4-hydroxy-3-methylbut-2-enyl diphosphate + 2 reduced [2Fe-2S]-[ferredoxin] + 2 H(+). The protein operates within isoprenoid biosynthesis; dimethylallyl diphosphate biosynthesis; dimethylallyl diphosphate from (2E)-4-hydroxy-3-methylbutenyl diphosphate: step 1/1. It functions in the pathway isoprenoid biosynthesis; isopentenyl diphosphate biosynthesis via DXP pathway; isopentenyl diphosphate from 1-deoxy-D-xylulose 5-phosphate: step 6/6. Catalyzes the conversion of 1-hydroxy-2-methyl-2-(E)-butenyl 4-diphosphate (HMBPP) into a mixture of isopentenyl diphosphate (IPP) and dimethylallyl diphosphate (DMAPP). Acts in the terminal step of the DOXP/MEP pathway for isoprenoid precursor biosynthesis. The protein is 4-hydroxy-3-methylbut-2-enyl diphosphate reductase of Histophilus somni (strain 2336) (Haemophilus somnus).